The following is a 529-amino-acid chain: Peptide chain release factor 3 (529 aa).

Residues 10 to 278 form the tr-type G domain; that stretch reads ARRRTFAIIS…NFVDLAPAPR (269 aa). GTP contacts are provided by residues 19–26, 87–91, and 141–144; these read SHPDAGKT, DTPGH, and NKLD.

Belongs to the TRAFAC class translation factor GTPase superfamily. Classic translation factor GTPase family. PrfC subfamily.

It is found in the cytoplasm. In terms of biological role, increases the formation of ribosomal termination complexes and stimulates activities of RF-1 and RF-2. It binds guanine nucleotides and has strong preference for UGA stop codons. It may interact directly with the ribosome. The stimulation of RF-1 and RF-2 is significantly reduced by GTP and GDP, but not by GMP. The protein is Peptide chain release factor 3 of Nitratidesulfovibrio vulgaris (strain ATCC 29579 / DSM 644 / CCUG 34227 / NCIMB 8303 / VKM B-1760 / Hildenborough) (Desulfovibrio vulgaris).